A 465-amino-acid chain; its full sequence is Ribulose bisphosphate carboxylase large chain (465 aa).

Position 4 is an N6,N6,N6-trimethyllysine (K4). Residue T163 participates in substrate binding. Catalysis depends on K165, which acts as the Proton acceptor. K167 contacts substrate. Mg(2+)-binding residues include K191, D193, and E194. K191 bears the N6-carboxylysine mark. The active-site Proton acceptor is H284. Residues R285, H317, and S369 each contribute to the substrate site.

This sequence belongs to the RuBisCO large chain family. Type I subfamily. Heterohexadecamer of 8 large chains and 8 small chains; disulfide-linked. The disulfide link is formed within the large subunit homodimers. Mg(2+) is required as a cofactor. The disulfide bond which can form in the large chain dimeric partners within the hexadecamer appears to be associated with oxidative stress and protein turnover.

The protein localises to the plastid. It localises to the chloroplast. It catalyses the reaction 2 (2R)-3-phosphoglycerate + 2 H(+) = D-ribulose 1,5-bisphosphate + CO2 + H2O. The catalysed reaction is D-ribulose 1,5-bisphosphate + O2 = 2-phosphoglycolate + (2R)-3-phosphoglycerate + 2 H(+). In terms of biological role, ruBisCO catalyzes two reactions: the carboxylation of D-ribulose 1,5-bisphosphate, the primary event in carbon dioxide fixation, as well as the oxidative fragmentation of the pentose substrate in the photorespiration process. Both reactions occur simultaneously and in competition at the same active site. The chain is Ribulose bisphosphate carboxylase large chain from Trochodendron aralioides (Wheel tree).